We begin with the raw amino-acid sequence, 206 residues long: Adenylate kinase (206 aa).

Position 10–15 (10–15) interacts with ATP; that stretch reads GAGKGT. The tract at residues 30–59 is NMP; that stretch reads STGDILREAVQKGTPLGKKAKEYMERGELV. AMP contacts are provided by residues Thr-31, 57 to 59, 82 to 85, and Gln-89; these read ELV and GFPR. ATP is bound by residues Arg-120, Arg-124, and 133–134; that span reads VY. Residues 123-153 form an LID region; sequence GRRINPETGEVYHVKYNPPPPGVKVIQREDD. Residue Arg-161 participates in AMP binding. ATP is bound at residue Lys-189.

Belongs to the adenylate kinase family. In terms of assembly, monomer.

The protein localises to the cytoplasm. The enzyme catalyses AMP + ATP = 2 ADP. Its pathway is purine metabolism; AMP biosynthesis via salvage pathway; AMP from ADP: step 1/1. Its function is as follows. Catalyzes the reversible transfer of the terminal phosphate group between ATP and AMP. Plays an important role in cellular energy homeostasis and in adenine nucleotide metabolism. This Aquifex aeolicus (strain VF5) protein is Adenylate kinase.